A 110-amino-acid chain; its full sequence is Large ribosomal subunit protein uL22 (110 aa).

The protein belongs to the universal ribosomal protein uL22 family. Part of the 50S ribosomal subunit.

Its function is as follows. This protein binds specifically to 23S rRNA; its binding is stimulated by other ribosomal proteins, e.g. L4, L17, and L20. It is important during the early stages of 50S assembly. It makes multiple contacts with different domains of the 23S rRNA in the assembled 50S subunit and ribosome. The globular domain of the protein is located near the polypeptide exit tunnel on the outside of the subunit, while an extended beta-hairpin is found that lines the wall of the exit tunnel in the center of the 70S ribosome. In Syntrophobacter fumaroxidans (strain DSM 10017 / MPOB), this protein is Large ribosomal subunit protein uL22.